A 487-amino-acid polypeptide reads, in one-letter code: DNA ligase (487 aa).

The active-site N6-AMP-lysine intermediate is the lysine 159. The ATP site is built by arginine 164, arginine 182, and glutamate 217. A divalent metal cation is bound at residue glutamate 217. The interval 229 to 237 (EGLDFLFDA) is interaction with the sliding clamp. Glutamate 344 contacts a divalent metal cation. Arginine 359 and lysine 365 together coordinate ATP.

Belongs to the ATP-dependent DNA ligase family. As to quaternary structure, interacts with the sliding clamp. Requires a divalent metal cation as cofactor.

It catalyses the reaction ATP + (deoxyribonucleotide)n-3'-hydroxyl + 5'-phospho-(deoxyribonucleotide)m = (deoxyribonucleotide)n+m + AMP + diphosphate.. Its function is as follows. DNA ligase, which is expressed in the early stage of lytic development, has been implicated in T4 DNA synthesis and genetic recombination. It may also play a role in T4 DNA repair. This chain is DNA ligase (30), found in Escherichia coli (Bacteriophage T6).